Reading from the N-terminus, the 574-residue chain is Sulfite reductase [NADPH] hemoprotein beta-component (574 aa).

C439, C445, C484, and C488 together coordinate [4Fe-4S] cluster. C488 contacts siroheme.

The protein belongs to the nitrite and sulfite reductase 4Fe-4S domain family. As to quaternary structure, alpha(8)-beta(8). The alpha component is a flavoprotein, the beta component is a hemoprotein. Requires siroheme as cofactor. [4Fe-4S] cluster is required as a cofactor.

The enzyme catalyses hydrogen sulfide + 3 NADP(+) + 3 H2O = sulfite + 3 NADPH + 4 H(+). It participates in sulfur metabolism; hydrogen sulfide biosynthesis; hydrogen sulfide from sulfite (NADPH route): step 1/1. Component of the sulfite reductase complex that catalyzes the 6-electron reduction of sulfite to sulfide. This is one of several activities required for the biosynthesis of L-cysteine from sulfate. This is Sulfite reductase [NADPH] hemoprotein beta-component from Paenibacillus sp. (strain JDR-2).